A 149-amino-acid chain; its full sequence is MNLFEDPEKEYHGIDYYDLYSEDKDSEIMYVCVLWDNKPFDIVAIIVAESIDKINDKISQLDKCVVKCLKKKLDKRINKFIVNDSSYETYLTDKYHGFYLEKNKSITDSESRKNQIESIIDYIQLNYNYDKYDNPEYFENIVYYLEPLK.

This is an uncharacterized protein from Acanthamoeba polyphaga (Amoeba).